Here is a 660-residue protein sequence, read N- to C-terminus: DNA ligase (660 aa).

NAD(+) is bound by residues 33-37 (DFVYD), 82-83 (SL), and E110. The active-site N6-AMP-lysine intermediate is K112. The NAD(+) site is built by R133, E167, K281, and K305. C396, C399, C412, and C417 together coordinate Zn(2+). The region spanning 583–660 (GENKLLAGKK…SFEDIKSYLD (78 aa)) is the BRCT domain.

This sequence belongs to the NAD-dependent DNA ligase family. LigA subfamily. Mg(2+) is required as a cofactor. The cofactor is Mn(2+).

It carries out the reaction NAD(+) + (deoxyribonucleotide)n-3'-hydroxyl + 5'-phospho-(deoxyribonucleotide)m = (deoxyribonucleotide)n+m + AMP + beta-nicotinamide D-nucleotide.. DNA ligase that catalyzes the formation of phosphodiester linkages between 5'-phosphoryl and 3'-hydroxyl groups in double-stranded DNA using NAD as a coenzyme and as the energy source for the reaction. It is essential for DNA replication and repair of damaged DNA. This Borreliella burgdorferi (strain ZS7) (Borrelia burgdorferi) protein is DNA ligase.